Reading from the N-terminus, the 939-residue chain is Valine--tRNA ligase (939 aa).

The short motif at 47–57 (PNVTGILHMGH) is the 'HIGH' region element. The short motif at 563 to 567 (KLSKS) is the 'KMSKS' region element. K566 is a binding site for ATP. Residues 874-939 (EHLAKERVRL…QSILDKLASL (66 aa)) are a coiled coil.

It belongs to the class-I aminoacyl-tRNA synthetase family. ValS type 1 subfamily. As to quaternary structure, monomer.

It localises to the cytoplasm. The enzyme catalyses tRNA(Val) + L-valine + ATP = L-valyl-tRNA(Val) + AMP + diphosphate. Functionally, catalyzes the attachment of valine to tRNA(Val). As ValRS can inadvertently accommodate and process structurally similar amino acids such as threonine, to avoid such errors, it has a 'posttransfer' editing activity that hydrolyzes mischarged Thr-tRNA(Val) in a tRNA-dependent manner. The chain is Valine--tRNA ligase from Chlamydia trachomatis serovar A (strain ATCC VR-571B / DSM 19440 / HAR-13).